The following is a 737-amino-acid chain: MSTNPKPQRKTKRNTNRRPQDVKFPGGGQIVGGVYLLPRRGPRLGVRATRKTSERSQPRGRRQPIPKDRRSTGKSWGKPGYPWPLYGNEGLGWAGWLLSPRGSRPSWGPNDPRHRSRNVGKVIDTLTCGFADLMGYIPVVGAPLGGVARALAHGVRVLEDGVNYATGNLPGCSFSIFLLALLSCITVPVSAVQVKNTSNSYMVTNDCSNDSITWQLQGAVLHVPGCVPCEKVGNMSRCWIPVSPNVAVRQPGALTQGLRTHIDMVVVSATLCSALYVGDLCGGVMLAAQMFIVSPQHHWFVQECNCSIYPGAITGHRMAWDMMMNWSPTATMILAYAMRVPEVIIDIISGAHWGVMFGLAYFSMQGAWAKVVVILLLAAGVDANTRTVAGSAAATTRGFTSMFSSGSKQNLQLINTNGSWHINRTALNCNDSLNTGFIASLFYVNRFNSSGCPHRLSVCRSIEAFRIGWGTLQYEDNVTNPEDMRPYCWHYPPKPCGIVPARSVCGPVYCFTPSPVVVGTTDARGVPTYTWGENETDVFLLNSTRPPRGSWFGCTWMNSTGFTKTCGAPPCRIRADFNASTDLLCPTDCFRKHSDATYIKCGSGPWLTPKCMVDYPYRLWHYPCTVNYSIFKIRMYVGGVEHRLTAACNFTRGDPCNLEDRDRSQLSPLLHSTTEWAILPCTYSDLPALSTGLLHLHQNIVDVQYMYGLSPALTKYVVRWEWVVLLFLLLADARVCA.

At S2 the chain carries N-acetylserine; by host. The tract at residues 2 to 23 is interaction with STAT1; the sequence is STNPKPQRKTKRNTNRRPQDVK. An interaction with EIF2AK2/PKR region spans residues 2–58; it reads STNPKPQRKTKRNTNRRPQDVKFPGGGQIVGGVYLLPRRGPRLGVRATRKTSERSQP. The segment at 2-59 is interaction with DDX3X; the sequence is STNPKPQRKTKRNTNRRPQDVKFPGGGQIVGGVYLLPRRGPRLGVRATRKTSERSQPR. Positions 2 to 75 are disordered; sequence STNPKPQRKT…PKDRRSTGKS (74 aa). The Cytoplasmic portion of the chain corresponds to 2-168; that stretch reads STNPKPQRKT…EDGVNYATGN (167 aa). 2 consecutive short sequence motifs (nuclear localization signal) follow at residues 5-13 and 38-43; these read PKPQRKTKR and PRRGPR. A compositionally biased stretch (basic residues) spans 7–16; that stretch reads PQRKTKRNTN. Residues 32-47 are compositionally biased toward low complexity; that stretch reads GGVYLLPRRGPRLGVR. S53 bears the Phosphoserine; by host mark. 2 short sequence motifs (nuclear localization signal) span residues 58–64 and 66–71; these read PRGRRQP and PKDRRS. 2 positions are modified to phosphoserine; by host: S99 and S116. The interval 112-152 is important for endoplasmic reticulum and mitochondrial localization; sequence PRHRSRNVGKVIDTLTCGFADLMGYIPVVGAPLGGVARALA. Positions 122 to 173 are interaction with APOA2; it reads VIDTLTCGFADLMGYIPVVGAPLGGVARALAHGVRVLEDGVNYATGNLPGCS. Residues 164 to 167 form an important for lipid droplets localization region; sequence YATG. Residues 169–189 form a helical membrane-spanning segment; sequence LPGCSFSIFLLALLSCITVPV. The propeptide at 178 to 191 is ER anchor for the core protein, removed in mature form by host signal peptidase; it reads LLALLSCITVPVSA. The Lumenal segment spans residues 190-358; it reads SAVQVKNTSN…SGAHWGVMFG (169 aa). 3 N-linked (GlcNAc...) asparagine; by host glycosylation sites follow: N196, N209, and N234. The interval 265-296 is important for fusion; the sequence is VVVSATLCSALYVGDLCGGVMLAAQMFIVSPQ. An N-linked (GlcNAc...) asparagine; by host glycan is attached at N305. A helical transmembrane segment spans residues 359–379; it reads LAYFSMQGAWAKVVVILLLAA. Residues 380 to 729 lie on the Lumenal side of the membrane; the sequence is GVDANTRTVA…WEWVVLLFLL (350 aa). The interval 385–411 is HVR1; the sequence is TRTVAGSAAATTRGFTSMFSSGSKQNL. N-linked (GlcNAc...) (high mannose) asparagine; by host glycosylation is found at N417, N423, N430, and N448. Cystine bridges form between C429/C554, C452/C459, C488/C496, and C505/C510. The interval 474–481 is HVR2; the sequence is YEDNVTNP. Residues 482-495 form a CD81-binding 1 region; it reads EDMRPYCWHYPPKP. N-linked (GlcNAc...) asparagine; by host glycosylation is present at N542. The segment at 546-553 is CD81-binding 2; it reads PPRGSWFG. N-linked (GlcNAc...) (high mannose) asparagine; by host glycosylation is present at N558. 4 disulfide bridges follow: C566–C571, C585–C589, C601–C624, and C611–C648. N-linked (GlcNAc...) (high mannose) asparagine; by host glycans are attached at residues N627 and N649. An intrachain disulfide couples C656 to C681. The segment at 664-675 is PKR/eIF2-alpha phosphorylation homology domain (PePHD); it reads SQLSPLLHSTTE. A helical transmembrane segment spans residues 730-737; that stretch reads LADARVCA.

It belongs to the hepacivirus polyprotein family. Homooligomer. Interacts with E1 (via C-terminus). Interacts with the non-structural protein 5A. Interacts (via N-terminus) with host STAT1 (via SH2 domain); this interaction results in decreased STAT1 phosphorylation and ubiquitin-mediated proteasome-dependent STAT1 degradation, leading to decreased IFN-stimulated gene transcription. Interacts with host STAT3; this interaction constitutively activates STAT3. Interacts with host LTBR receptor. Interacts with host TNFRSF1A receptor and possibly induces apoptosis. Interacts with host HNRPK. Interacts with host YWHAE. Interacts with host UBE3A/E6AP. Interacts with host DDX3X. Interacts with host APOA2. Interacts with host RXRA protein. Interacts with host SP110 isoform 3/Sp110b; this interaction sequesters the transcriptional corepressor SP110 away from the nucleus. Interacts with host CREB3 nuclear transcription protein; this interaction triggers cell transformation. Interacts with host ACY3. Interacts with host C1QR1. Interacts with host RBM24; this interaction, which enhances the interaction of the mature core protein with 5'-UTR, may inhibit viral translation and favor replication. Interacts with host EIF2AK2/PKR; this interaction induces the autophosphorylation of EIF2AK2. Part of the viral assembly initiation complex composed of NS2, E1, E2, NS3, NS4A, NS5A and the mature core protein. In terms of assembly, forms a heterodimer with envelope glycoprotein E2. Interacts with mature core protein. Interacts with protease NS2. The heterodimer E1/E2 interacts with host CLDN1; this interaction plays a role in viral entry into host cell. Interacts with host SPSB2 (via C-terminus). Part of the viral assembly initiation complex composed of NS2, E1, E2, NS3, NS4A, NS5A and the mature core protein. As to quaternary structure, forms a heterodimer with envelope glycoprotein E1. Interacts with host CD81 and SCARB1 receptors; these interactions play a role in viral entry into host cell. Interacts with host EIF2AK2/PKR; this interaction inhibits EIF2AK2 and probably allows the virus to evade the innate immune response. Interacts with host CD209/DC-SIGN and CLEC4M/DC-SIGNR. Interact with host SPCS1; this interaction is essential for viral particle assembly. Interacts with protease NS2. The heterodimer E1/E2 interacts with host CLDN1; this interaction plays a role in viral entry into host cell. Part of the viral assembly initiation complex composed of NS2, E1, E2, NS3, NS4A, NS5A and the mature core protein. Specific enzymatic cleavages in vivo yield mature proteins. The structural proteins, core, E1, E2 and p7 are produced by proteolytic processing by host signal peptidases. The core protein precursor is synthesized as a 23 kDa, which is retained in the ER membrane through the hydrophobic signal peptide. Cleavage by the signal peptidase releases the 21 kDa mature core protein. The cleavage of the core protein precursor occurs between aminoacids 176 and 188 but the exact cleavage site is not known. Some degraded forms of the core protein appear as well during the course of infection. The other proteins (p7, NS2, NS3, NS4A, NS4B, NS5A and NS5B) are cleaved by the viral proteases. Autoprocessing between NS2 and NS3 is mediated by the NS2 cysteine protease catalytic domain and regulated by the NS3 N-terminal domain. In terms of processing, phosphorylated by host PKC and PKA. Post-translationally, ubiquitinated; mediated by UBE3A and leading to core protein subsequent proteasomal degradation. Highly N-glycosylated.

It is found in the host endoplasmic reticulum membrane. It localises to the host mitochondrion membrane. The protein localises to the virion. The protein resides in the host cytoplasm. Its subcellular location is the host nucleus. It is found in the host lipid droplet. It localises to the virion membrane. Functionally, packages viral RNA to form a viral nucleocapsid, and promotes virion budding. Participates in the viral particle production as a result of its interaction with the non-structural protein 5A. Binds RNA and may function as a RNA chaperone to induce the RNA structural rearrangements taking place during virus replication. Modulates viral translation initiation by interacting with viral IRES and 40S ribosomal subunit. Affects various cell signaling pathways, host immunity and lipid metabolism. Prevents the establishment of cellular antiviral state by blocking the interferon-alpha/beta (IFN-alpha/beta) and IFN-gamma signaling pathways and by blocking the formation of phosphorylated STAT1 and promoting ubiquitin-mediated proteasome-dependent degradation of STAT1. Activates STAT3 leading to cellular transformation. Regulates the activity of cellular genes, including c-myc and c-fos. May repress the promoter of p53, and sequester CREB3 and SP110 isoform 3/Sp110b in the cytoplasm. Represses cell cycle negative regulating factor CDKN1A, thereby interrupting an important check point of normal cell cycle regulation. Targets transcription factors involved in the regulation of inflammatory responses and in the immune response: suppresses TNF-induced NF-kappa-B activation, and activates AP-1. Binds to dendritic cells (DCs) via C1QR1, resulting in down-regulation of T-lymphocytes proliferation. Alters lipid metabolism by interacting with hepatocellular proteins involved in lipid accumulation and storage. Induces up-regulation of FAS promoter activity, and thereby contributes to the increased triglyceride accumulation in hepatocytes (steatosis). In terms of biological role, forms a heterodimer with envelope glycoprotein E2, which mediates virus attachment to the host cell, virion internalization through clathrin-dependent endocytosis and fusion with host membrane. Fusion with the host cell is most likely mediated by both E1 and E2, through conformational rearrangements of the heterodimer required for fusion rather than a classical class II fusion mechanism. E1/E2 heterodimer binds host apolipoproteins such as APOB and ApoE thereby forming a lipo-viro-particle (LVP). APOE associated to the LVP allows the initial virus attachment to cell surface receptors such as the heparan sulfate proteoglycans (HSPGs), syndecan-1 (SDC1), syndecan-1 (SDC2), the low-density lipoprotein receptor (LDLR) and scavenger receptor class B type I (SCARB1). The cholesterol transfer activity of SCARB1 allows E2 exposure and binding of E2 to SCARB1 and the tetraspanin CD81. E1/E2 heterodimer binding on CD81 activates the epithelial growth factor receptor (EGFR) signaling pathway. Diffusion of the complex E1-E2-EGFR-SCARB1-CD81 to the cell lateral membrane allows further interaction with Claudin 1 (CLDN1) and occludin (OCLN) to finally trigger HCV entry. Its function is as follows. Forms a heterodimer with envelope glycoprotein E1, which mediates virus attachment to the host cell, virion internalization through clathrin-dependent endocytosis and fusion with host membrane. Fusion with the host cell is most likely mediated by both E1 and E2, through conformational rearrangements of the heterodimer required for fusion rather than a classical class II fusion mechanism. The interaction between envelope glycoprotein E2 and host apolipoprotein E/APOE allows the proper assembly, maturation and infectivity of the viral particles. This interaction is probably promoted via the up-regulation of cellular autophagy by the virus. E1/E2 heterodimer binds host apolipoproteins such as APOB and APOE thereby forming a lipo-viro-particle (LVP). APOE associated to the LVP allows the initial virus attachment to cell surface receptors such as the heparan sulfate proteoglycans (HSPGs), syndecan-1 (SDC1), syndecan-1 (SDC2), the low-density lipoprotein receptor (LDLR) and scavenger receptor class B type I (SCARB1). The cholesterol transfer activity of SCARB1 allows E2 exposure and binding of E2 to SCARB1 and the tetraspanin CD81. E1/E2 heterodimer binding on CD81 activates the epithelial growth factor receptor (EGFR) signaling pathway. Diffusion of the complex E1-E2-EGFR-SCARB1-CD81 to the cell lateral membrane allows further interaction with Claudin 1 (CLDN1) and occludin (OCLN) to finally trigger HCV entry. Inhibits host EIF2AK2/PKR activation, preventing the establishment of an antiviral state. Viral ligand for CD209/DC-SIGN and CLEC4M/DC-SIGNR, which are respectively found on dendritic cells (DCs), and on liver sinusoidal endothelial cells and macrophage-like cells of lymph node sinuses. These interactions allow the capture of circulating HCV particles by these cells and subsequent facilitated transmission to permissive cells such as hepatocytes and lymphocyte subpopulations. In Homo sapiens (Human), this protein is Genome polyprotein.